A 71-amino-acid polypeptide reads, in one-letter code: UPF0352 protein Spea_1764 (71 aa).

This sequence belongs to the UPF0352 family.

In Shewanella pealeana (strain ATCC 700345 / ANG-SQ1), this protein is UPF0352 protein Spea_1764.